Consider the following 190-residue polypeptide: 7-methyl-GTP pyrophosphatase (190 aa).

Catalysis depends on aspartate 69, which acts as the Proton acceptor.

This sequence belongs to the Maf family. YceF subfamily. Requires a divalent metal cation as cofactor.

The protein localises to the cytoplasm. The catalysed reaction is N(7)-methyl-GTP + H2O = N(7)-methyl-GMP + diphosphate + H(+). Nucleoside triphosphate pyrophosphatase that hydrolyzes 7-methyl-GTP (m(7)GTP). May have a dual role in cell division arrest and in preventing the incorporation of modified nucleotides into cellular nucleic acids. This chain is 7-methyl-GTP pyrophosphatase, found in Xanthomonas oryzae pv. oryzae (strain MAFF 311018).